The sequence spans 147 residues: Small ribosomal subunit protein uS12 (147 aa).

The protein belongs to the universal ribosomal protein uS12 family. In terms of assembly, part of the 30S ribosomal subunit.

In terms of biological role, with S4 and S5 plays an important role in translational accuracy. Located at the interface of the 30S and 50S subunits. The chain is Small ribosomal subunit protein uS12 from Methanococcus maripaludis (strain DSM 14266 / JCM 13030 / NBRC 101832 / S2 / LL).